The sequence spans 34 residues: Leader peptide SpeFL (34 aa).

Positions 10-16 match the Ornithine recognition loop motif; sequence HIRRTTH. Residue R13 participates in L-ornithine binding.

It belongs to the speF operon leader peptide family. As to quaternary structure, binds ornithine in stalled 70S ribosomes, blocking the upper two-thirds of the exit tunnel. Contacts 23S rRNA and ribosomal proteins L4 and L22.

Its function is as follows. A small protein (arrest peptide) encoded upstream of inducible ornithine carboxylase gene (speF) that controls expression of downstream genes (speF and potE) by transcriptional and translational attenuation. Its expression controls transcription and translation of downstream SpeF; translation pausing at low Arg levels on this mRNA prevents premature Rho-dependent transcription termination of speF and also enhances SprF translation by preventing sequestration of its ribosome-binding site. In the presence of high Arg levels translation of this protein allows the formation of an speF mRNA structure that is degraded by RNase G. The polypeptide is Leader peptide SpeFL (Salmonella typhimurium (strain SL1344)).